The primary structure comprises 2298 residues: Protein Ycf2 (2298 aa).

1637 to 1644 (GSIGTGRS) is an ATP binding site.

It belongs to the Ycf2 family.

It localises to the plastid. The protein localises to the chloroplast stroma. Probable ATPase of unknown function. Its presence in a non-photosynthetic plant (Epifagus virginiana) and experiments in tobacco indicate that it has an essential function which is probably not related to photosynthesis. The sequence is that of Protein Ycf2 from Lotus japonicus (Lotus corniculatus var. japonicus).